The primary structure comprises 628 residues: RING finger protein 112 (628 aa).

The RING-type zinc-finger motif lies at 57–98 (CSICLERPREPISLDCGHDFCPRCFSTHRVPGCGPPCCPECR). The segment at 132-628 (AVRAEPLLLV…GDREPLLQEE (497 aa)) is interaction with ZBTB16. One can recognise a GB1/RHD3-type G domain in the interval 167-409 (DTPVCLLAVL…RCPGYWSEGR (243 aa)). 318 to 319 (RD) contacts GTP. Helical transmembrane passes span 544–564 (LAAV…GVVG) and 577–597 (GMVA…GGGV).

This sequence belongs to the TRAFAC class dynamin-like GTPase superfamily. GB1/RHD3 GTPase family. GB1 subfamily. As to quaternary structure, self-associates. Interacts with SP1 in an oxidative stress-regulated manner. Interacts with SIGMAR1 in an oxidative stress-regulated manner. Interacts with ZBTB16 (via C2H2-type zinc finger domains 1 and 2). Auto-ubiquitinated.

The protein resides in the membrane. The protein localises to the cytoplasm. It is found in the nucleus. Its subcellular location is the nuclear body. It localises to the nucleoplasm. The protein resides in the endosome. The protein localises to the cytoplasmic vesicle. It is found in the secretory vesicle. Its subcellular location is the synaptic vesicle. It localises to the postsynaptic density. The protein resides in the perikaryon. The protein localises to the cell projection. It is found in the neuron projection. It catalyses the reaction S-ubiquitinyl-[E2 ubiquitin-conjugating enzyme]-L-cysteine + [acceptor protein]-L-lysine = [E2 ubiquitin-conjugating enzyme]-L-cysteine + N(6)-ubiquitinyl-[acceptor protein]-L-lysine.. It participates in protein modification; protein ubiquitination. E3 ubiquitin-protein ligase that plays an important role in neuronal differentiation, including neurogenesis and gliogenesis, during brain development. During embryonic development initiates neuronal differentiation by inducing cell cycle arrest at the G0/G1 phase through up-regulation of cell-cycle regulatory proteins. Plays a role not only in the fetal period during the development of the nervous system, but also in the adult brain, where it is involved in the maintenance of neural functions and protection of the nervous tissue cells from oxidative stress-induced damage. Exhibits GTPase and E3 ubiquitin-protein ligase activities. Regulates dendritic spine density and synaptic neurotransmission; its ability to hydrolyze GTP is involved in the maintenance of dendritic spine density. This chain is RING finger protein 112 (RNF112), found in Bos taurus (Bovine).